The following is a 348-amino-acid chain: Protein RecA (348 aa).

Position 66-73 (66-73) interacts with ATP; sequence GPESSGKT.

It belongs to the RecA family.

It localises to the cytoplasm. In terms of biological role, can catalyze the hydrolysis of ATP in the presence of single-stranded DNA, the ATP-dependent uptake of single-stranded DNA by duplex DNA, and the ATP-dependent hybridization of homologous single-stranded DNAs. It interacts with LexA causing its activation and leading to its autocatalytic cleavage. The chain is Protein RecA from Neisseria meningitidis serogroup A / serotype 4A (strain DSM 15465 / Z2491).